The chain runs to 601 residues: MAKHIVELTDALSNKIAAGEVVERPASVVKELVENAIDAGSTVIDILVEEAGLNKITIIDNGSGIEEEDVATAFLRHATSKIKNEADLFRVHTLGFRGEALPSIASVSHLAMETSTGETKGTSISLEGGKIIEQKSGHARKGTQIEVSQLFFNTPARLKYLKSLPTELGNITDILNRLALAHPDISFRFSHNGKPLLQTNGNGDLRQVIAAIYGISIAKKSIPVKAESLDFKISGYAVLPEVNRSNRNYISTIINGRFIKNFALVKAIQEGYHTLLPIGRFPIIVLQIEMDPIIVDVNVHPAKLEVRLSKEKELGQLISQMIKEAFHKLQLIPEGEISKKQKEVQKSEQIQMSFEENKPAKEIPTLFSKPTIPEYVPSDEDAPREDDFILETMPPYEPQAEQEEHSKERIPKMYPIGQMHATYIFAQNENGLYIIDQHAAQERIKYEFYREKIGEVSRELQELLVPIVLEFPADEYVRLEEQKAKLEEVGVFLENFGQNSFIIRAHPTWFPKDQEEEMLREIIDEALSAPSISIHKLREDTAIMMSCKKSIKANHYLTTQDMEALLDTLREASDPFTCPHGRPVIIQYSTYELEKMFKRVM.

This sequence belongs to the DNA mismatch repair MutL/HexB family.

Functionally, this protein is involved in the repair of mismatches in DNA. It is required for dam-dependent methyl-directed DNA mismatch repair. May act as a 'molecular matchmaker', a protein that promotes the formation of a stable complex between two or more DNA-binding proteins in an ATP-dependent manner without itself being part of a final effector complex. This chain is DNA mismatch repair protein MutL, found in Listeria monocytogenes serovar 1/2a (strain ATCC BAA-679 / EGD-e).